The chain runs to 377 residues: Alanine racemase (377 aa).

Lys-37 (proton acceptor; specific for D-alanine) is an active-site residue. Lys-37 carries the N6-(pyridoxal phosphate)lysine modification. Position 135 (Arg-135) interacts with substrate. Tyr-271 functions as the Proton acceptor; specific for L-alanine in the catalytic mechanism. Residue Met-319 coordinates substrate.

The protein belongs to the alanine racemase family. The cofactor is pyridoxal 5'-phosphate.

It carries out the reaction L-alanine = D-alanine. The protein operates within amino-acid biosynthesis; D-alanine biosynthesis; D-alanine from L-alanine: step 1/1. In terms of biological role, catalyzes the interconversion of L-alanine and D-alanine. May also act on other amino acids. The protein is Alanine racemase (alr) of Helicobacter acinonychis (strain Sheeba).